The chain runs to 281 residues: MDKAKFIDVLSDSTGETAEKAVRAALLQYPDAGVQIRLHTRVRTPEVARPVLERAAQEGALVVFTVVSPELREFVHASTAELNIEAIDLIGSLIVRLGTFLDREPINLPSAMLPLSEEYFRRIEAVEFAVKSDDGKEPRNFKRADIVLVGVSRTSKTPLSTLLAQRGLKVANLPLVLGVPPPLELMEAPQDRVVGLTIGIDQLCEIRQARLRQLGMPSETNYAMREHVRQELDFANRLFAAHPEWPVVDVTKRAIEETAVIILEHLKERDERAKVVRSSLV.

ADP is bound at residue 150–157 (GVSRTSKT).

It belongs to the pyruvate, phosphate/water dikinase regulatory protein family. PDRP subfamily.

It carries out the reaction N(tele)-phospho-L-histidyl/L-threonyl-[pyruvate, phosphate dikinase] + ADP = N(tele)-phospho-L-histidyl/O-phospho-L-threonyl-[pyruvate, phosphate dikinase] + AMP + H(+). The catalysed reaction is N(tele)-phospho-L-histidyl/O-phospho-L-threonyl-[pyruvate, phosphate dikinase] + phosphate + H(+) = N(tele)-phospho-L-histidyl/L-threonyl-[pyruvate, phosphate dikinase] + diphosphate. Bifunctional serine/threonine kinase and phosphorylase involved in the regulation of the pyruvate, phosphate dikinase (PPDK) by catalyzing its phosphorylation/dephosphorylation. This chain is Putative pyruvate, phosphate dikinase regulatory protein, found in Sorangium cellulosum (strain So ce56) (Polyangium cellulosum (strain So ce56)).